A 159-amino-acid chain; its full sequence is MDAAGAGAGGKLKKGAAGRKAGGPRKKAVSRSVKAGLQFPVGRIGRYLKKGRYAQRIGTGAPVYLAAVLEYLAAEVLELAGNAARDNKKNRIIPRHVLLAIRNDEELGKLLAGVTIAHGGVLPNINPVLLPKKTAEKAAAAGKEAKSPKKAAGKSPKKA.

The span at 1 to 10 (MDAAGAGAGG) shows a compositional bias: gly residues. 2 disordered regions span residues 1–29 (MDAA…KKAV) and 136–159 (EKAA…PKKA). Basic residues-rich tracts occupy residues 11 to 29 (KLKK…KKAV) and 148 to 159 (PKKAAGKSPKKA). 2 short sequence motifs (SPKK motif) span residues 147-150 (SPKK) and 155-158 (SPKK).

This sequence belongs to the histone H2A family. In terms of assembly, the nucleosome is a histone octamer containing two molecules each of H2A, H2B, H3 and H4 assembled in one H3-H4 heterotetramer and two H2A-H2B heterodimers. The octamer wraps approximately 147 bp of DNA.

The protein resides in the nucleus. It localises to the chromosome. Its function is as follows. Core component of nucleosome. Nucleosomes wrap and compact DNA into chromatin, limiting DNA accessibility to the cellular machineries which require DNA as a template. Histones thereby play a central role in transcription regulation, DNA repair, DNA replication and chromosomal stability. DNA accessibility is regulated via a complex set of post-translational modifications of histones, also called histone code, and nucleosome remodeling. The polypeptide is Probable histone H2A.5 (Oryza sativa subsp. indica (Rice)).